Consider the following 443-residue polypeptide: Xaa-Pro dipeptidase (443 aa).

5 residues coordinate Mn(2+): aspartate 246, aspartate 257, histidine 339, glutamate 384, and glutamate 423.

Belongs to the peptidase M24B family. Bacterial-type prolidase subfamily. Mn(2+) serves as cofactor.

The enzyme catalyses Xaa-L-Pro dipeptide + H2O = an L-alpha-amino acid + L-proline. In terms of biological role, splits dipeptides with a prolyl residue in the C-terminal position. This chain is Xaa-Pro dipeptidase, found in Edwardsiella ictaluri (strain 93-146).